The primary structure comprises 405 residues: Argininosuccinate synthase (405 aa).

ATP-binding positions include 10–18 and A37; that span reads AYSGGLDTS. Y88 and S93 together coordinate L-citrulline. Position 118 (G118) interacts with ATP. L-aspartate-binding residues include T120, N124, and D125. Residue N124 participates in L-citrulline binding. 5 residues coordinate L-citrulline: R128, S179, S188, E264, and Y276.

It belongs to the argininosuccinate synthase family. Type 1 subfamily. In terms of assembly, homotetramer.

It is found in the cytoplasm. It carries out the reaction L-citrulline + L-aspartate + ATP = 2-(N(omega)-L-arginino)succinate + AMP + diphosphate + H(+). It participates in amino-acid biosynthesis; L-arginine biosynthesis; L-arginine from L-ornithine and carbamoyl phosphate: step 2/3. The polypeptide is Argininosuccinate synthase (Stutzerimonas stutzeri (strain A1501) (Pseudomonas stutzeri)).